Consider the following 176-residue polypeptide: Ribosome maturation factor RimM (176 aa).

A PRC barrel domain is found at 97–176 (EDEFYWRDLI…QILVDWDPDF (80 aa)).

The protein belongs to the RimM family. In terms of assembly, binds ribosomal protein uS19.

The protein resides in the cytoplasm. Functionally, an accessory protein needed during the final step in the assembly of 30S ribosomal subunit, possibly for assembly of the head region. Essential for efficient processing of 16S rRNA. May be needed both before and after RbfA during the maturation of 16S rRNA. It has affinity for free ribosomal 30S subunits but not for 70S ribosomes. The polypeptide is Ribosome maturation factor RimM (Shewanella sp. (strain MR-4)).